Reading from the N-terminus, the 287-residue chain is HTH-type transcriptional regulator MurR (287 aa).

An HTH rpiR-type domain is found at 1–77 (MLYLAKMRNA…MALIEEHSVS (77 aa)). Positions 37 to 56 (SRNMAKQLEISQSSIVKFAQ) form a DNA-binding region, H-T-H motif. The region spanning 128–268 (VINLISKAPL…FVGMVQLNDV (141 aa)) is the SIS domain.

Homotetramer.

The protein operates within amino-sugar metabolism; N-acetylmuramate degradation [regulation]. In terms of biological role, represses the expression of the murPQ operon involved in the uptake and degradation of N-acetylmuramic acid (MurNAc). Binds to two adjacent inverted repeats within the operator region. MurNAc 6-phosphate, the substrate of MurQ, is the specific inducer that weakens binding of MurR to the operator. In Salmonella arizonae (strain ATCC BAA-731 / CDC346-86 / RSK2980), this protein is HTH-type transcriptional regulator MurR.